Here is a 395-residue protein sequence, read N- to C-terminus: WW domain-containing transcription regulator protein 1 (395 aa).

Residue lysine 46 forms a Glycyl lysine isopeptide (Lys-Gly) (interchain with G-Cter in ubiquitin) linkage. Residues 52 to 116 (FFKEPDSGSH…AQQHAHLRQQ (65 aa)) form a disordered region. Residues 61-70 (HSRQSSTDSS) show a composition bias toward polar residues. Serine 62 carries the post-translational modification Phosphoserine. A Phosphoserine; by LATS2 modification is found at serine 89. Residues 124 to 157 (LPLPPGWEMTFTATGQRYFLNHIEKITTWQDPRK) enclose the WW domain. The required for interaction with PALS1 stretch occupies residues 221 to 395 (PNALTTQQQQ…NKSEPFLTWL (175 aa)). Residues 224–258 (LTTQQQQQQKLRLQRIQMERERIRMRQEELMRQEA) adopt a coiled-coil conformation. Residues 277 to 293 (PAMSTDMRSVTNSSSDP) show a composition bias toward polar residues. The tract at residues 277–308 (PAMSTDMRSVTNSSSDPFLNGGPYHSREQSTD) is disordered. Serine 290 carries the post-translational modification Phosphoserine. Position 306 is a phosphoserine; by LATS2 (serine 306). Positions 389–395 (EPFLTWL) match the PDZ-binding motif.

As to quaternary structure, binds to SLC9A3R2 via the PDZ motif at the plasma membrane. Binds to YWHAZ in vivo and in vitro through the phosphoserine-binding motif RSHSSP. Interacts (via coiled-coil domain) with SMAD2 (via MH1 domain), SMAD3 and SMAD4. Interacts with MED15. Interacts with PAX8 and NKX2-1. Interacts with TEAD1, TEAD2, TEAD3 and TEAD4. Interacts (via WW domain) with PALS1. Interacts with LATS1. Interacts with YAP1 (when phosphorylated at 'Ser-112'). Interacts (via WW domain) with PRRG4 (via cytoplasmic domain). Interacts (via WW domain) with AMOTL2 (via PPXY motif); the interaction promotes WWTR1/TAZ localization to the cytoplasm and tight junctions, thereby inhibiting its transcriptional coactivator properties. Interacts (via WW domain) with AMOT; the interaction facilitates translocation of WWTR1/TAZ to the cytoplasm. Phosphorylated by LATS2 and STK3/MST2. Phosphorylation by LATS2 results in creation of 14-3-3 binding sites, retention in the cytoplasm, and functional inactivation. Phosphorylation results in the inhibition of transcriptional coactivation through YWHAZ-mediated nuclear export. Post-translationally, ubiquitinated at Lys-46; leading to proteasomal degradation. Deubiquitinated and stabilized by UCHL1 at Lys-46; leading to inhibition of osteoclastogenesis. Highly expressed in kidney, heart, placenta and lung.

Its subcellular location is the nucleus. It is found in the cytoplasm. It localises to the cell membrane. The protein localises to the cell junction. The protein resides in the tight junction. Functionally, transcriptional coactivator which acts as a downstream regulatory target in the Hippo signaling pathway that plays a pivotal role in organ size control and tumor suppression by restricting proliferation and promoting apoptosis. The core of this pathway is composed of a kinase cascade wherein STK3/MST2 and STK4/MST1, in complex with its regulatory protein SAV1, phosphorylates and activates LATS1/2 in complex with its regulatory protein MOB1, which in turn phosphorylates and inactivates YAP1 oncoprotein and WWTR1/TAZ. WWTR1 enhances PAX8 and NKX2-1/TTF1-dependent gene activation. In conjunction with YAP1, involved in the regulation of TGFB1-dependent SMAD2 and SMAD3 nuclear accumulation. Plays a key role in coupling SMADs to the transcriptional machinery such as the mediator complex. Regulates embryonic stem-cell self-renewal, promotes cell proliferation and epithelial-mesenchymal transition. The polypeptide is WW domain-containing transcription regulator protein 1 (Mus musculus (Mouse)).